A 469-amino-acid chain; its full sequence is Siroheme synthase (469 aa).

Positions 1–211 (MSTQLQTWDF…GRTDKARAML (211 aa)) are precorrin-2 dehydrogenase /sirohydrochlorin ferrochelatase. NAD(+)-binding positions include 29-30 (EQ) and 50-51 (DP). Position 136 is a phosphoserine (Ser-136). Positions 227–469 (GEVYLVGAGP…TLRDRLRWMD (243 aa)) are uroporphyrinogen-III C-methyltransferase. Pro-236 is a binding site for S-adenosyl-L-methionine. The Proton acceptor role is filled by Asp-259. Catalysis depends on Lys-281, which acts as the Proton donor. Residues 312–314 (GGD), Ile-317, 342–343 (TA), Met-394, and Gly-423 each bind S-adenosyl-L-methionine.

The protein in the N-terminal section; belongs to the precorrin-2 dehydrogenase / sirohydrochlorin ferrochelatase family. This sequence in the C-terminal section; belongs to the precorrin methyltransferase family.

The enzyme catalyses uroporphyrinogen III + 2 S-adenosyl-L-methionine = precorrin-2 + 2 S-adenosyl-L-homocysteine + H(+). The catalysed reaction is precorrin-2 + NAD(+) = sirohydrochlorin + NADH + 2 H(+). It catalyses the reaction siroheme + 2 H(+) = sirohydrochlorin + Fe(2+). It functions in the pathway cofactor biosynthesis; adenosylcobalamin biosynthesis; precorrin-2 from uroporphyrinogen III: step 1/1. The protein operates within cofactor biosynthesis; adenosylcobalamin biosynthesis; sirohydrochlorin from precorrin-2: step 1/1. Its pathway is porphyrin-containing compound metabolism; siroheme biosynthesis; precorrin-2 from uroporphyrinogen III: step 1/1. It participates in porphyrin-containing compound metabolism; siroheme biosynthesis; siroheme from sirohydrochlorin: step 1/1. It functions in the pathway porphyrin-containing compound metabolism; siroheme biosynthesis; sirohydrochlorin from precorrin-2: step 1/1. Its function is as follows. Multifunctional enzyme that catalyzes the SAM-dependent methylations of uroporphyrinogen III at position C-2 and C-7 to form precorrin-2 via precorrin-1. Then it catalyzes the NAD-dependent ring dehydrogenation of precorrin-2 to yield sirohydrochlorin. Finally, it catalyzes the ferrochelation of sirohydrochlorin to yield siroheme. The sequence is that of Siroheme synthase from Hahella chejuensis (strain KCTC 2396).